The following is a 526-amino-acid chain: DDB1- and CUL4-associated factor 17 (526 aa).

Transmembrane regions (helical) follow at residues 200-220 and 237-257; these read ILMR…MLEI and GVLA…EYIV.

It is found in the membrane. It localises to the nucleus. The protein resides in the nucleolus. Its pathway is protein modification; protein ubiquitination. Functionally, may function as a substrate receptor for CUL4-DDB1 E3 ubiquitin-protein ligase complex. The protein is DDB1- and CUL4-associated factor 17 (dcaf17) of Danio rerio (Zebrafish).